Reading from the N-terminus, the 176-residue chain is MASTTSRSARPARRNNKAAGSTTPLLWLAFALLVVLLDQFFKIVIVRSFTYGESRPVTGFFNLVLVYNKGAAFSFLADAGGWQRWFFTGLGVVVGAFIVWLLYRHTGQRLFCFAVSLILGGAVGNVVDRVIYGHVIDFLDFYVGRYHWPAFNVADCAITVGAVLLIVDELRRVRKH.

The next 4 helical transmembrane spans lie at 26–46 (LWLAFALLVVLLDQFFKIVIV), 57–77 (VTGFFNLVLVYNKGAAFSFLA), 82–102 (WQRWFFTGLGVVVGAFIVWLL), and 111–131 (FCFAVSLILGGAVGNVVDRVI). Active-site residues include Asp137 and Asp155. A helical membrane pass occupies residues 147–167 (HWPAFNVADCAITVGAVLLIV).

The protein belongs to the peptidase A8 family.

It localises to the cell inner membrane. It catalyses the reaction Release of signal peptides from bacterial membrane prolipoproteins. Hydrolyzes -Xaa-Yaa-Zaa-|-(S,diacylglyceryl)Cys-, in which Xaa is hydrophobic (preferably Leu), and Yaa (Ala or Ser) and Zaa (Gly or Ala) have small, neutral side chains.. It participates in protein modification; lipoprotein biosynthesis (signal peptide cleavage). This protein specifically catalyzes the removal of signal peptides from prolipoproteins. This is Lipoprotein signal peptidase from Cupriavidus taiwanensis (strain DSM 17343 / BCRC 17206 / CCUG 44338 / CIP 107171 / LMG 19424 / R1) (Ralstonia taiwanensis (strain LMG 19424)).